An 802-amino-acid chain; its full sequence is Copper-exporting P-type ATPase (802 aa).

2 consecutive HMA domains span residues 5-70 (KKTT…YGVA) and 72-138 (ETVE…YDAS). Cys16, Cys19, Cys83, and Cys86 together coordinate Cu(+). 6 consecutive transmembrane segments (helical) span residues 161–181 (LIISAVLSLPLLMLMFVHLFN), 192–212 (WFQFILATPVQFIIGWQFYVG), 224–244 (MDVLVAVGTSAAYFYSIYEMV), 256–276 (LYFETSAVLITLILFGKYLEA), 411–431 (YFVPIVVGIALLTFIVWITLV), and 438–458 (PALVASISVLVIACPCALGLA). The active-site 4-aspartylphosphate intermediate is Asp495. The Mg(2+) site is built by Asp690 and Asp694. 2 consecutive transmembrane segments (helical) span residues 748–767 (LFWAFGYNIAGIPIAALGLL) and 771–790 (VAGAAMALSSVSVVTNALRL).

This sequence belongs to the cation transport ATPase (P-type) (TC 3.A.3) family. Type IB subfamily.

It localises to the cell membrane. The enzyme catalyses Cu(+)(in) + ATP + H2O = Cu(+)(out) + ADP + phosphate + H(+). Functionally, involved in copper export. The sequence is that of Copper-exporting P-type ATPase (copA) from Staphylococcus aureus (strain COL).